Here is a 671-residue protein sequence, read N- to C-terminus: MRLGVALSTIAVLLTATSARNLDKRQWGWPNFGGGNGGNGGNGGKTINDYKREQGAGRDIHVYAPSNLAPNSPLLLSLHGMDQDPNYQQSNTHWETLADSEGFVVVYPRGGTGMSTWDIQGTKDTQWVSQIIDQMKKEYNIDTKRVYLSGFSMGGMFTYHAMSQIANKIAAFAPCSGPNVFGASKAQRPVPIFHVHGTNDDVLNYQQVEGFLKNYRDQFHCPSQADTKTNYPNRENPNATLYTWGPCDKGVYIKHLKLQGRGHSPSSADIQDIWDFVSQWTVDGPVSASGNGGGNTTPTNPSTGGNGNGNGGGNTTPTNPSTGGNGNGNGGSTDKCSSNITKQGYKCCASNCEVVYTDSDGDWGVENDQWCGCGNRVTVGSGTCSAKILQQGYKCCPSGCIIYYTDEDGTWGVNGEEWCGCGSGSSSTGGGNDAPSSGSGYQGANGTNFCNNAKHSGESVTVTSNKVGDINGIGYELWADSGNNSATFYDDGSFSCSFQRAKDYLCRSGLSFDSTKTHKQIGHIYAEFKLVKQNIQNVDYSYVGIYGWTRNPLVEFYVVDNWLSQWRPGDWVGNKKHGDFTIGGAQYTVYENTRYGPSIDGDTNFKQYFSIRQQPRDCGTIDITAHFEQWEKLGMTMGKMHEAKVLGEAGSNNGGTSGTADFPFAKVYVKN.

Positions 1–19 are cleaved as a signal peptide; sequence MRLGVALSTIAVLLTATSA. Positions 54–279 are acetylxylan esterase; sequence QGAGRDIHVY…IQDIWDFVSQ (226 aa). Residue S152 is the Charge relay system of the active site. N238 carries an N-linked (GlcNAc...) asparagine glycan. Positions 285–328 are disordered; the sequence is PVSASGNGGGNTTPTNPSTGGNGNGNGGGNTTPTNPSTGGNGNG. A compositionally biased stretch (gly residues) spans 304-314; the sequence is GGNGNGNGGGN. CBM10 domains follow at residues 335–374 and 383–422; these read KCSSNITKQGYKCCASNCEVVYTDSDGDWGVENDQWCGCG and TCSAKILQQGYKCCPSGCIIYYTDEDGTWGVNGEEWCGCG. The N-linked (GlcNAc...) asparagine glycan is linked to N339. 2 N-linked (GlcNAc...) asparagine glycosylation sites follow: N445 and N483. The 201-residue stretch at 461–661 folds into the GH11 domain; the sequence is TVTSNKVGDI…NNGGTSGTAD (201 aa). Catalysis depends on E555, which acts as the Nucleophile. E648 acts as the Proton donor in catalysis.

This sequence in the N-terminal section; belongs to the axeA family. In the C-terminal section; belongs to the glycosyl hydrolase 11 (cellulase G) family.

It is found in the secreted. It catalyses the reaction Deacetylation of xylans and xylo-oligosaccharides.. The catalysed reaction is Endohydrolysis of (1-&gt;4)-beta-D-xylosidic linkages in xylans.. The protein operates within glycan degradation; xylan degradation. Functionally, bifunctional acetylxylan esterase/xylanase involved in the hydrolysis of xylan, a major structural heterogeneous polysaccharide found in plant biomass representing the second most abundant polysaccharide in the biosphere, after cellulose. Degrades xylan from acetylxylan, beechwood, birchwood, and oat spelt, and releases acetate from 4-methylumbelliferyl acetate and beta-D-xylose tetraacetate. No activity is observed against carboxy methyl cellulose, beta-glucan, p-nitrophenol acetate, p-nitrophenol laurate, p-nitrophenol myristate, p-nitrophenol, palmitate, or beta-naphthol acetate. The chain is Bifunctional acetylxylan esterase/xylanase XynS20E (xynS20E) from Neocallimastix patriciarum (Rumen fungus).